The sequence spans 267 residues: MRILVEIAYQGNQFLGFQIQQQGRTVQQQFEKILKRMHKHHVRIHPSSRTDRGVHAYQQFFHFDTELNIDNKQWQYAMNRALPDDIYVKNVRNVDEYFHCRYDCVGKRYRYKVYQGNHRNPFKSGTETFVNETLDYDKMNKAAQEFIGTHDFTGFCSQKTEVESKVRTLYQSEIVATKEGFDYVVTGSGFLYNMVRVLVAFLIEVGKGKREPNDVPKLLEDKNRNNVPLTAPPDGLYLEKIYLSPEELIQEYGKDVKIHYKKSLEKH.

Residue Asp51 is the Nucleophile of the active site. Position 109 (Tyr109) interacts with substrate.

This sequence belongs to the tRNA pseudouridine synthase TruA family. Homodimer.

The enzyme catalyses uridine(38/39/40) in tRNA = pseudouridine(38/39/40) in tRNA. Functionally, formation of pseudouridine at positions 38, 39 and 40 in the anticodon stem and loop of transfer RNAs. This chain is tRNA pseudouridine synthase A, found in Staphylococcus epidermidis (strain ATCC 35984 / DSM 28319 / BCRC 17069 / CCUG 31568 / BM 3577 / RP62A).